A 479-amino-acid polypeptide reads, in one-letter code: Probable xyloglucan galactosyltransferase GT15 (479 aa).

Topologically, residues 1-20 (MKNNNSSSVSIENHPWKKKP) are cytoplasmic. A helical; Signal-anchor for type II membrane protein transmembrane segment spans residues 21-40 (TTLLLFLSLLSISLLLLRLS). Residues 41 to 479 (QDKIILITTT…GIRRNEFKTD (439 aa)) are Lumenal-facing. N-linked (GlcNAc...) asparagine glycosylation is found at Asn155, Asn242, Asn285, and Asn391.

This sequence belongs to the glycosyltransferase 47 family. Expressed in roots, hypocotyls, cotyledons, leaves, stems and sepals.

It localises to the golgi apparatus membrane. Its function is as follows. Functions in xyloglucan synthesis by adding side chains to the xylosylated glucan backbone. Involved in the galactosylation of hemicellulose xyloglucan. The protein is Probable xyloglucan galactosyltransferase GT15 of Arabidopsis thaliana (Mouse-ear cress).